The chain runs to 300 residues: Energy-coupling factor transporter ATP-binding protein EcfA2 (300 aa).

One can recognise an ABC transporter domain in the interval Ile3–Leu258. Gly40–Thr47 contacts ATP.

The protein belongs to the ABC transporter superfamily. Energy-coupling factor EcfA family. Forms a stable energy-coupling factor (ECF) transporter complex composed of 2 membrane-embedded substrate-binding proteins (S component), 2 ATP-binding proteins (A component) and 2 transmembrane proteins (T component).

The protein localises to the cell membrane. Its function is as follows. ATP-binding (A) component of a common energy-coupling factor (ECF) ABC-transporter complex. Unlike classic ABC transporters this ECF transporter provides the energy necessary to transport a number of different substrates. The polypeptide is Energy-coupling factor transporter ATP-binding protein EcfA2 (Mesomycoplasma hyopneumoniae (strain 232) (Mycoplasma hyopneumoniae)).